The primary structure comprises 280 residues: Cycloeucalenol cycloisomerase (280 aa).

The next 6 membrane-spanning stretches (helical) occupy residues leucine 22–tyrosine 42, tyrosine 53–glycine 73, alanine 89–phenylalanine 109, phenylalanine 167–isoleucine 187, methionine 201–phenylalanine 221, and alanine 244–leucine 264.

It localises to the membrane. It carries out the reaction cycloeucalenol = obtusifoliol. In terms of biological role, converts pentacyclic cyclopropyl sterols to tetracyclic sterols. This Arabidopsis thaliana (Mouse-ear cress) protein is Cycloeucalenol cycloisomerase (CPI1).